The following is a 128-amino-acid chain: UPF0102 protein KPN78578_35270 (128 aa).

The tract at residues 1–20 (MAQVPAGKNRSGQLSKQTGD) is disordered.

It belongs to the UPF0102 family.

This chain is UPF0102 protein KPN78578_35270, found in Klebsiella pneumoniae subsp. pneumoniae (strain ATCC 700721 / MGH 78578).